Reading from the N-terminus, the 316-residue chain is Probable porphobilinogen deaminase (316 aa).

C234 carries the post-translational modification S-(dipyrrolylmethanemethyl)cysteine.

This sequence belongs to the HMBS family. Dipyrromethane is required as a cofactor.

The enzyme catalyses 4 porphobilinogen + H2O = hydroxymethylbilane + 4 NH4(+). It participates in porphyrin-containing compound metabolism; protoporphyrin-IX biosynthesis; coproporphyrinogen-III from 5-aminolevulinate: step 2/4. Tetrapolymerization of the monopyrrole PBG into the hydroxymethylbilane pre-uroporphyrinogen in several discrete steps. The protein is Probable porphobilinogen deaminase of Methanosarcina barkeri (strain Fusaro / DSM 804).